The chain runs to 500 residues: ADP,ATP carrier protein 5 (500 aa).

The next 11 helical transmembrane spans lie at 21–41 (IYNYELGKFIPMSALMFCILF), 62–82 (IAGFAKVYCVTPAAALFVIIY), 94–114 (IFYYLTAFFIGFFVLFAFVIY), 149–169 (YIVYYSLAELWPNIFYVLLFW), 184–204 (FYTLFSLFGNSSLILVGFLMM), 224–244 (ITLVQISTILVTIVAVICCLL), 287–307 (LWLLLICSAAFGFAINLVEAV), 328–348 (LYILWTGVAIMVMTIIGNNVM), 357–377 (AVISPVIIMVTGVLFFVLIVF), 381–401 (ILSLFDGAILMSPLALAVSIG), and 469–489 (SISPVLMVVFTFVCLAWIYAV).

The protein belongs to the ADP/ATP translocase tlc family.

It is found in the cell membrane. Functionally, provides the rickettsial cell with host ATP in exchange for rickettsial ADP. This is an obligate exchange system. This energy acquiring activity is an important component of rickettsial parasitism. The sequence is that of ADP,ATP carrier protein 5 (tlcE) from Rickettsia bellii (strain RML369-C).